The following is a 282-amino-acid chain: MHSQTRAAVVTGAASGIGLALSARFARAGAGVVMADVEGGALHRRAAELIAEGARVTAVTADLTDPDAVERLAETAFDRLGDIDVVCNNAGVLGPVGQPLWEVPLERMRQVFEVNHWAHVLVARAFVPRLLERGRPAHLIHTASMSAFVVGAGSAAYAASKHADLAVARSLRADPPGDLRGTAVRVSVLCPGRVDTPMVEGLTAPRGAGGDTSVSAEDVAGVVWEALGSDRFYLFSNSDAPLRLRDQFDDVWRHVPLPPPSPEEELWPVPKTTTATTATTKH.

12 to 36 (GAASGIGLALSARFARAGAGVVMAD) contacts NAD(+). Position 144 (serine 144) interacts with substrate. The active-site Proton acceptor is the tyrosine 157. NAD(+) is bound at residue lysine 161. Positions 258 to 282 (PPPSPEEELWPVPKTTTATTATTKH) are disordered. Low complexity predominate over residues 267–282 (WPVPKTTTATTATTKH).

This sequence belongs to the short-chain dehydrogenases/reductases (SDR) family.

It catalyses the reaction 1-deoxy-11beta-hydroxypentalenate + NAD(+) = 1-deoxy-11-oxopentalenate + NADH + H(+). It participates in antibiotic biosynthesis; pentalenolactone biosynthesis. Functionally, catalyzes the oxidation of 1-deoxy-11-beta-hydroxypentalenic acid to 1-deoxy-11-oxopentalenic acid in the biosynthesis of pentalenolactone antibiotic. This chain is 1-deoxy-11-beta-hydroxypentalenate dehydrogenase (pntF), found in Streptomyces arenae.